The chain runs to 104 residues: Large ribosomal subunit protein eL30 (104 aa).

It belongs to the eukaryotic ribosomal protein eL30 family.

This chain is Large ribosomal subunit protein eL30 (rpl30e), found in Sulfolobus acidocaldarius (strain ATCC 33909 / DSM 639 / JCM 8929 / NBRC 15157 / NCIMB 11770).